Consider the following 467-residue polypeptide: Acyl-lipid (8-3)-desaturase B (467 aa).

One can recognise a Cytochrome b5 heme-binding domain in the interval 12 to 89 (LKLYTWDEVS…IKQYEIGYIS (78 aa)). Heme is bound by residues histidine 47 and histidine 70. 2 helical membrane passes run 123 to 143 (VSVGVFTRMVLIYLFLFVTYY) and 152 to 172 (FWLNCIFAVLYGVANSLFGLH). Residues 175-179 (HDACH) carry the Histidine box-1 motif. Residues 187-207 (MTWKILGATFDLFAGASFYAW) form a helical membrane-spanning segment. The Histidine box-2 motif lies at 211-216 (HVIGHH). 2 helical membrane-spanning segments follow: residues 293-313 (AIFILGKLVFIISRFILPLIY) and 317-337 (FSHLICFFLISELVLGWYLAI). Positions 400 to 404 (QVIHH) match the Histidine box-3 motif.

Belongs to the fatty acid desaturase type 1 family. The cofactor is Fe(2+).

The protein resides in the membrane. It catalyses the reaction an (8Z,11Z,14Z)-icosatrienoyl-containing glycerolipid + 2 Fe(II)-[cytochrome b5] + O2 + 2 H(+) = (5Z,8Z,11Z,14Z)-eicosatetraenoyl-containing glycerolipid + 2 Fe(III)-[cytochrome b5] + 2 H2O. It carries out the reaction an (8Z,11Z,14Z,17Z)-eicosatetraenoyl-containing glycerolipid + 2 Fe(II)-[cytochrome b5] + O2 + 2 H(+) = a (5Z,8Z,11Z,14Z,17Z)-eicosapentaenoyl-containing glycerolipid + 2 Fe(III)-[cytochrome b5] + 2 H2O. Its function is as follows. Fatty acid desaturase that introduces a cis double bond at the 5-position in 18-carbon polyunsaturated fatty acids. The protein is Acyl-lipid (8-3)-desaturase B (fadB) of Dictyostelium discoideum (Social amoeba).